A 504-amino-acid polypeptide reads, in one-letter code: Pentatricopeptide repeat-containing protein At1g09220, mitochondrial (504 aa).

Residues 1–87 constitute a mitochondrion transit peptide; sequence MFLFSSRRIT…FLFNPLLRCY (87 aa). PPR repeat units lie at residues 76 to 110, 120 to 156, 157 to 187, 188 to 222, 223 to 253, 255 to 289, 291 to 321, 324 to 358, 359 to 390, and 396 to 430; these read KLFLFNPLLRCYSLGETPLHAYFLYDQLQRLHFLS, DSFTYLFLLKASSNPRFPSLLLGIGLHGLTLKLGFES, HVYVQTALVGMYLVGGNMIDAHKVFDEMPER, NPVTWNVMITGLTNLGDFEKALCFLEKMPNRTVVS, WTTIIDGYARVDKPKEAILLFSRMVACDAIK, NEITILAILPAVWNLGDLKMCGSVHAYVGKRGFVP, DIRVTNSLIDAYAKCGCIQSAFKFFIEIPNG, NLVSWTTMISAFAIHGMGKEAVSMFKDMERLGLKP, NRVTMISVLNACSHGGLAEEEFLEFFNTMVNE, and DVKHYGCLVDMLRRKGRLEEAEKIALEIPIEEKAV. A type E motif; degenerate region spans residues 431-504; it reads VWRMLLGACS…AKLPGHSQVT (74 aa).

This sequence belongs to the PPR family. PCMP-E subfamily.

The protein resides in the mitochondrion. The polypeptide is Pentatricopeptide repeat-containing protein At1g09220, mitochondrial (PCMP-E25) (Arabidopsis thaliana (Mouse-ear cress)).